A 90-amino-acid polypeptide reads, in one-letter code: Major mite allergen Der p 23 (90 aa).

The first 21 residues, 1 to 21 (MKFNIIIVFISLAILVHSSYA), serve as a signal peptide directing secretion. The segment at 22–42 (ANDNDDDPTTTVHPTTTEQPD) is disordered. Low complexity predominate over residues 30–39 (TTTVHPTTTE). The Chitin-binding type-2 domain occupies 44-90 (KFECPSRFGYFADPKDPHKFYICSNWEAVHKDCPGNTRWNEDEETCT). Disulfide bonds link C47–C66 and C76–C89. Positions 52–90 (GYFADPKDPHKFYICSNWEAVHKDCPGNTRWNEDEETCT) are important for IgE-binding.

Monomer. In terms of tissue distribution, expressed in epithelial cells of the midgut.

The protein localises to the secreted. The protein resides in the endoplasmic reticulum. It localises to the cytoplasmic vesicle. Functionally, does not bind chitin in vitro. The protein is Major mite allergen Der p 23 of Dermatophagoides pteronyssinus (European house dust mite).